The primary structure comprises 230 residues: Ribonuclease 3 (230 aa).

The RNase III domain maps to 5–134; sequence NDTISKVINY…LIGAIYIDGG (130 aa). E47 contributes to the Mg(2+) binding site. D51 is a catalytic residue. The Mg(2+) site is built by N120 and E123. E123 is an active-site residue. The 70-residue stretch at 159 to 228 folds into the DRBM domain; that stretch reads DPKTSLQEWT…AELILEKIKK (70 aa).

The protein belongs to the ribonuclease III family. As to quaternary structure, homodimer. It depends on Mg(2+) as a cofactor.

It localises to the cytoplasm. It catalyses the reaction Endonucleolytic cleavage to 5'-phosphomonoester.. Functionally, digests double-stranded RNA. Involved in the processing of primary rRNA transcript to yield the immediate precursors to the large and small rRNAs (23S and 16S). Processes some mRNAs, and tRNAs when they are encoded in the rRNA operon. Processes pre-crRNA and tracrRNA of type II CRISPR loci if present in the organism. The protein is Ribonuclease 3 of Wolbachia pipientis subsp. Culex pipiens (strain wPip).